Consider the following 817-residue polypeptide: LPS-assembly protein LptD (817 aa).

An N-terminal signal peptide occupies residues 1–45 (MDRLPLPHALHVPTHRPFAAPLPPRRLLARLAALMLCGVPLAVLA).

Belongs to the LptD family. Component of the lipopolysaccharide transport and assembly complex. Interacts with LptE and LptA.

It localises to the cell outer membrane. In terms of biological role, together with LptE, is involved in the assembly of lipopolysaccharide (LPS) at the surface of the outer membrane. This is LPS-assembly protein LptD from Acidovorax sp. (strain JS42).